Here is a 353-residue protein sequence, read N- to C-terminus: Quinolinate synthase (353 aa).

Residues histidine 47 and serine 68 each contribute to the iminosuccinate site. A [4Fe-4S] cluster-binding site is contributed by cysteine 113. Residues 139-141 (YAN) and serine 156 each bind iminosuccinate. Cysteine 200 is a binding site for [4Fe-4S] cluster. Iminosuccinate contacts are provided by residues 226-228 (HPE) and threonine 243. Cysteine 297 serves as a coordination point for [4Fe-4S] cluster.

It belongs to the quinolinate synthase family. Type 1 subfamily. The cofactor is [4Fe-4S] cluster.

The protein resides in the cytoplasm. It catalyses the reaction iminosuccinate + dihydroxyacetone phosphate = quinolinate + phosphate + 2 H2O + H(+). The protein operates within cofactor biosynthesis; NAD(+) biosynthesis; quinolinate from iminoaspartate: step 1/1. Functionally, catalyzes the condensation of iminoaspartate with dihydroxyacetone phosphate to form quinolinate. The protein is Quinolinate synthase of Vibrio campbellii (strain ATCC BAA-1116).